The following is a 257-amino-acid chain: Phosphonates import ATP-binding protein PhnC (257 aa).

The ABC transporter domain occupies 4–248 (IEFKDVNKVY…VFNDIYGRKL (245 aa)). 37-44 (GLSGAGKS) is a binding site for ATP.

Belongs to the ABC transporter superfamily. Phosphonates importer (TC 3.A.1.9.1) family. As to quaternary structure, the complex is composed of two ATP-binding proteins (PhnC), two transmembrane proteins (PhnE) and a solute-binding protein (PhnD).

It is found in the cell membrane. The enzyme catalyses phosphonate(out) + ATP + H2O = phosphonate(in) + ADP + phosphate + H(+). Part of the ABC transporter complex PhnCDE involved in phosphonates import. Responsible for energy coupling to the transport system. This Staphylococcus haemolyticus (strain JCSC1435) protein is Phosphonates import ATP-binding protein PhnC.